A 638-amino-acid chain; its full sequence is Probable potassium transport system protein Kup (638 aa).

12 helical membrane passes run 25–45 (LAIA…LYSL), 65–85 (VISL…LLFV), 114–134 (AGAL…DAVI), 152–172 (PHLS…LFWI), 184–204 (FGPI…YHIV), 226–246 (LLQA…AEAL), 262–282 (AYGL…ALLI), 291–311 (PFFL…STVA), 352–372 (IYVP…VIGF), 382–402 (YGIA…VVMV), 410–430 (LLVG…FGAN), and 434–454 (VAQG…LLMT).

The protein belongs to the HAK/KUP transporter (TC 2.A.72) family.

Its subcellular location is the cell inner membrane. It catalyses the reaction K(+)(in) + H(+)(in) = K(+)(out) + H(+)(out). Functionally, transport of potassium into the cell. Likely operates as a K(+):H(+) symporter. The polypeptide is Probable potassium transport system protein Kup (Burkholderia lata (strain ATCC 17760 / DSM 23089 / LMG 22485 / NCIMB 9086 / R18194 / 383)).